A 37-amino-acid chain; its full sequence is Large ribosomal subunit protein bL36 (37 aa).

This sequence belongs to the bacterial ribosomal protein bL36 family.

This Mycoplasmoides gallisepticum (strain R(low / passage 15 / clone 2)) (Mycoplasma gallisepticum) protein is Large ribosomal subunit protein bL36 (rpmJ).